The primary structure comprises 22 residues: Magnificalysin II (22 aa).

A plays an important role in the hemolytic activity region spans residues 3–12 (ALAGTIIDGA). The segment at 11–22 (GASLGFDILNKV) is N-terminal region.

It belongs to the actinoporin family. Sea anemone subfamily. In terms of assembly, octamer or nonamer in membranes. Monomer in the soluble state.

The protein localises to the secreted. The protein resides in the nematocyst. It is found in the target cell membrane. Its function is as follows. Pore-forming protein that forms cations-selective hydrophilic pores of around 1 nm and causes cytolysis. Pore formation is a multi-step process that involves specific recognition of membrane sphingomyelin (but neither cholesterol nor phosphatidylcholine) using aromatic rich region and adjacent phosphocholine (POC) binding site, firm binding to the membrane (mainly driven by hydrophobic interactions) accompanied by the transfer of the N-terminal region to the lipid-water interface and finally pore formation after oligomerization of monomers. In Heteractis magnifica (Magnificent sea anemone), this protein is Magnificalysin II.